The chain runs to 440 residues: Light-independent protochlorophyllide reductase subunit N (440 aa).

3 residues coordinate [4Fe-4S] cluster: Cys15, Cys40, and Cys99.

It belongs to the BchN/ChlN family. In terms of assembly, protochlorophyllide reductase is composed of three subunits; BchL, BchN and BchB. Forms a heterotetramer of two BchB and two BchN subunits. [4Fe-4S] cluster is required as a cofactor.

The catalysed reaction is chlorophyllide a + oxidized 2[4Fe-4S]-[ferredoxin] + 2 ADP + 2 phosphate = protochlorophyllide a + reduced 2[4Fe-4S]-[ferredoxin] + 2 ATP + 2 H2O. It participates in porphyrin-containing compound metabolism; bacteriochlorophyll biosynthesis (light-independent). Its function is as follows. Component of the dark-operative protochlorophyllide reductase (DPOR) that uses Mg-ATP and reduced ferredoxin to reduce ring D of protochlorophyllide (Pchlide) to form chlorophyllide a (Chlide). This reaction is light-independent. The NB-protein (BchN-BchB) is the catalytic component of the complex. The protein is Light-independent protochlorophyllide reductase subunit N of Heliobacterium mobile (Heliobacillus mobilis).